The following is a 432-amino-acid chain: Adenylosuccinate synthetase (432 aa).

GTP is bound by residues 13–19 and 41–43; these read GDEGKGK and GHT. The active-site Proton acceptor is the D14. 2 residues coordinate Mg(2+): D14 and G41. IMP contacts are provided by residues 14–17, 39–42, T130, R144, Q225, T240, and R304; these read DEGK and NAGH. Residue H42 is the Proton donor of the active site. 300–306 contacts substrate; the sequence is AVTGRPR. GTP contacts are provided by residues R306, 332–334, and 415–417; these read KLD and STG.

Belongs to the adenylosuccinate synthetase family. As to quaternary structure, homodimer. The cofactor is Mg(2+).

It is found in the cytoplasm. It carries out the reaction IMP + L-aspartate + GTP = N(6)-(1,2-dicarboxyethyl)-AMP + GDP + phosphate + 2 H(+). It participates in purine metabolism; AMP biosynthesis via de novo pathway; AMP from IMP: step 1/2. Plays an important role in the de novo pathway of purine nucleotide biosynthesis. Catalyzes the first committed step in the biosynthesis of AMP from IMP. In Haemophilus ducreyi (strain 35000HP / ATCC 700724), this protein is Adenylosuccinate synthetase.